A 125-amino-acid chain; its full sequence is Small ribosomal subunit protein eS8 (125 aa).

The disordered stretch occupies residues 1–20 (MLWQGESIRKVTGGRRRPAQ).

It belongs to the eukaryotic ribosomal protein eS8 family. In terms of assembly, part of the 30S ribosomal subunit.

The protein is Small ribosomal subunit protein eS8 of Methanoregula boonei (strain DSM 21154 / JCM 14090 / 6A8).